Reading from the N-terminus, the 504-residue chain is ATP synthase subunit alpha (504 aa).

169 to 176 contributes to the ATP binding site; that stretch reads GDRQTGKT.

This sequence belongs to the ATPase alpha/beta chains family. F-type ATPases have 2 components, CF(1) - the catalytic core - and CF(0) - the membrane proton channel. CF(1) has five subunits: alpha(3), beta(3), gamma(1), delta(1), epsilon(1). CF(0) has three main subunits: a(1), b(2) and c(9-12). The alpha and beta chains form an alternating ring which encloses part of the gamma chain. CF(1) is attached to CF(0) by a central stalk formed by the gamma and epsilon chains, while a peripheral stalk is formed by the delta and b chains.

It is found in the cell membrane. The catalysed reaction is ATP + H2O + 4 H(+)(in) = ADP + phosphate + 5 H(+)(out). Its function is as follows. Produces ATP from ADP in the presence of a proton gradient across the membrane. The alpha chain is a regulatory subunit. This Clostridium botulinum (strain ATCC 19397 / Type A) protein is ATP synthase subunit alpha.